A 509-amino-acid polypeptide reads, in one-letter code: Bifunctional purine biosynthesis protein PurH (509 aa).

An MGS-like domain is found at 1–145 (MIKRALISVF…KSFKDVVVIS (145 aa)).

The protein belongs to the PurH family.

It catalyses the reaction (6R)-10-formyltetrahydrofolate + 5-amino-1-(5-phospho-beta-D-ribosyl)imidazole-4-carboxamide = 5-formamido-1-(5-phospho-D-ribosyl)imidazole-4-carboxamide + (6S)-5,6,7,8-tetrahydrofolate. It carries out the reaction IMP + H2O = 5-formamido-1-(5-phospho-D-ribosyl)imidazole-4-carboxamide. It functions in the pathway purine metabolism; IMP biosynthesis via de novo pathway; 5-formamido-1-(5-phospho-D-ribosyl)imidazole-4-carboxamide from 5-amino-1-(5-phospho-D-ribosyl)imidazole-4-carboxamide (10-formyl THF route): step 1/1. It participates in purine metabolism; IMP biosynthesis via de novo pathway; IMP from 5-formamido-1-(5-phospho-D-ribosyl)imidazole-4-carboxamide: step 1/1. The polypeptide is Bifunctional purine biosynthesis protein PurH (Brachyspira hyodysenteriae (strain ATCC 49526 / WA1)).